The chain runs to 123 residues: uncharacterized protein (123 aa).

This is an uncharacterized protein from Shigella boydii serotype 4 (strain Sb227).